Here is a 161-residue protein sequence, read N- to C-terminus: uncharacterized protein (161 aa).

Disordered stretches follow at residues 1-67 and 80-147; these read MNSN…IQNF and DSHQ…KKKQ. Residues 84–126 are compositionally biased toward low complexity; it reads NFNDNGFNNNNNNNNSNMNHNFSNQNNYNNNNNNNNNNNSNFN. The span at 135 to 147 shows a compositional bias: polar residues; it reads GTSSQVGNNKKKQ.

This is an uncharacterized protein from Dictyostelium discoideum (Social amoeba).